Here is a 306-residue protein sequence, read N- to C-terminus: Phosphoribosylaminoimidazole-succinocarboxamide synthase (306 aa).

An N-acetylserine modification is found at serine 2.

Belongs to the SAICAR synthetase family. Monomer.

It carries out the reaction 5-amino-1-(5-phospho-D-ribosyl)imidazole-4-carboxylate + L-aspartate + ATP = (2S)-2-[5-amino-1-(5-phospho-beta-D-ribosyl)imidazole-4-carboxamido]succinate + ADP + phosphate + 2 H(+). It functions in the pathway purine metabolism; IMP biosynthesis via de novo pathway; 5-amino-1-(5-phospho-D-ribosyl)imidazole-4-carboxamide from 5-amino-1-(5-phospho-D-ribosyl)imidazole-4-carboxylate: step 1/2. Catalyzes the reaction of 4-carboxy-5-aminoimidazole ribotide (CAIR) and aspartic acid with the formation of N-succinyl-5-amino-imidazole-4-carboxamide ribotide (SAICAR) in the purine biosynthesis pathway. The sequence is that of Phosphoribosylaminoimidazole-succinocarboxamide synthase (ADE1) from Saccharomyces cerevisiae (strain ATCC 204508 / S288c) (Baker's yeast).